Consider the following 1323-residue polypeptide: Inositol hexakisphosphate and diphosphoinositol-pentakisphosphate kinase (1323 aa).

26–27 (RK) contributes to the substrate binding site. ATP contacts are provided by residues arginine 109, lysine 162, histidine 169, arginine 188, 212 to 215 (EEFI), and 221 to 223 (DVK). Residue 188 to 189 (RK) coordinates substrate. Substrate is bound by residues lysine 223 and arginine 237. Residues aspartate 284 and 296–298 (DVN) each bind ATP. 301 to 304 (SFVK) contributes to the substrate binding site. The tract at residues 355 to 426 (TTPSGKLAEL…VLELARALVI (72 aa)) is polyphosphoinositide-binding domain. Composition is skewed to polar residues over residues 933–947 (FNLS…SSRS) and 977–992 (VTPT…NDDL). Disordered regions lie at residues 933–1022 (FNLS…SEDD), 1043–1107 (AMAD…GGGK), and 1134–1155 (IVIP…ASER). A compositionally biased stretch (low complexity) spans 993–1006 (SISSNAESTAAEST). A compositionally biased stretch (basic and acidic residues) spans 1062–1074 (KSMEEGDKPHGEW). A compositionally biased stretch (low complexity) spans 1090–1101 (SNEMESNNESME).

The protein belongs to the histidine acid phosphatase family. VIP1 subfamily.

The protein localises to the cytoplasm. It localises to the cytosol. It catalyses the reaction 1D-myo-inositol hexakisphosphate + ATP = 1-diphospho-1D-myo-inositol 2,3,4,5,6-pentakisphosphate + ADP. The enzyme catalyses 5-diphospho-1D-myo-inositol 1,2,3,4,6-pentakisphosphate + ATP + H(+) = 1,5-bis(diphospho)-1D-myo-inositol 2,3,4,6-tetrakisphosphate + ADP. Its function is as follows. Bifunctional inositol kinase that acts in concert with the IP6K kinases to synthesize the diphosphate group-containing inositol pyrophosphates diphosphoinositol pentakisphosphate, PP-InsP5, and bis-diphosphoinositol tetrakisphosphate, (PP)2-InsP4. PP-InsP5 and (PP)2-InsP4, also respectively called InsP7 and InsP8, may regulate a variety of cellular processes, including apoptosis, vesicle trafficking, cytoskeletal dynamics, and exocytosis. Phosphorylates inositol hexakisphosphate (InsP6) at position 1 to produce PP-InsP5 which is in turn phosphorylated by IP6Ks to produce (PP)2-InsP4. Alternatively, phosphorylates PP-InsP5 at position 1, produced by IP6Ks from InsP6, to produce (PP)2-InsP4. This chain is Inositol hexakisphosphate and diphosphoinositol-pentakisphosphate kinase, found in Caenorhabditis elegans.